Reading from the N-terminus, the 588-residue chain is MTRQRTQHVHFLGIGGSGLSPLAQIHLAGGGKVSGSDAEDSPRVATLRARGVPVRVGPAPAAEKIAAELAGVDVVVASSALAEDHPEIVAARSLGLAVRRRSEWLPELTAGYRLVAVAGSHGKSTTSAMLTLVLRAAGLDPTAVIGAEVSQLGGNALAGSGDLFVLESDEYGGAFAGLEPTIAVITNVEWEHPDIFPDEASVRTAFTAFARRVRPGGRLVVCGDDPGVAAVLAELHRQGTPAAAPVLDYGFGTDRRWRAVDVATVAGDDTARAVVLHGGQEIGTLTLAVPGRHSLLNALAVLAVATELGVAPAQTLATLATYTGAARRFEFVGFWRAGTPDPAVPAAAGAAAAPPVRRDPATAAAAATTAPIGPPDSPPPTGIALPRAAPPAVDAPVAATPAPAAGPDHAAALPAPAGALASRSPTGPATAVADPVGEWSLEIIDDYAHHPTEIRLTLAAARARTHGRALWAVLQPHTYSRFAALLDGFATAFADADRVYVTDIYAARETDDLGRHPTDLVERLVGPAVVGYVPWPELVDRLAADVRDTLSGPVPAQAGGILLLTLGAGTITTVGPRLLAALDEPAAG.

Residue 119-125 (GSHGKST) coordinates ATP. Over residues 344-371 (VPAAAGAAAAPPVRRDPATAAAAATTAP) the composition is skewed to low complexity. The interval 344 to 411 (VPAAAGAAAA…APAAGPDHAA (68 aa)) is disordered. Residues 372–381 (IGPPDSPPPT) are compositionally biased toward pro residues. Positions 382–411 (GIALPRAAPPAVDAPVAATPAPAAGPDHAA) are enriched in low complexity.

Belongs to the MurCDEF family.

It is found in the cytoplasm. The catalysed reaction is UDP-N-acetyl-alpha-D-muramate + L-alanine + ATP = UDP-N-acetyl-alpha-D-muramoyl-L-alanine + ADP + phosphate + H(+). It participates in cell wall biogenesis; peptidoglycan biosynthesis. Functionally, cell wall formation. This is UDP-N-acetylmuramate--L-alanine ligase from Frankia alni (strain DSM 45986 / CECT 9034 / ACN14a).